The chain runs to 368 residues: Mitogen-activated protein kinase 7 (368 aa).

Residues 32 to 319 form the Protein kinase domain; that stretch reads YVPIKPIGRG…VTDALLHPYM (288 aa). Residues 38–46 and K61 each bind ATP; that span reads IGRGAYGVV. The active-site Proton acceptor is D158. A Phosphothreonine modification is found at T191. A TXY motif is present at residues 191-193; sequence TEY. Y193 carries the phosphotyrosine modification. Residue T196 is modified to Phosphothreonine.

This sequence belongs to the protein kinase superfamily. CMGC Ser/Thr protein kinase family. MAP kinase subfamily. As to quaternary structure, interacts with MKK3. Mg(2+) serves as cofactor. Dually phosphorylated on Thr-191 and Tyr-193, which activates the enzyme.

It catalyses the reaction L-seryl-[protein] + ATP = O-phospho-L-seryl-[protein] + ADP + H(+). It carries out the reaction L-threonyl-[protein] + ATP = O-phospho-L-threonyl-[protein] + ADP + H(+). With respect to regulation, activated by threonine and tyrosine phosphorylation. Activated in response to hydrogen peroxide. Activation is triggered by MAPKKK17 and MAPKKK18 in a MKK3-dependent manner. Its function is as follows. MKK3-MPK7 module acts as a positive regulator of PR1 gene expression. In Arabidopsis thaliana (Mouse-ear cress), this protein is Mitogen-activated protein kinase 7 (MPK7).